A 165-amino-acid chain; its full sequence is Chorismate pyruvate-lyase (165 aa).

Substrate contacts are provided by Met-35, Arg-77, Leu-115, and Glu-156.

Belongs to the UbiC family. As to quaternary structure, monomer.

Its subcellular location is the cytoplasm. It catalyses the reaction chorismate = 4-hydroxybenzoate + pyruvate. The protein operates within cofactor biosynthesis; ubiquinone biosynthesis. Its function is as follows. Removes the pyruvyl group from chorismate, with concomitant aromatization of the ring, to provide 4-hydroxybenzoate (4HB) for the ubiquinone pathway. The polypeptide is Chorismate pyruvate-lyase (Escherichia coli (strain K12 / MC4100 / BW2952)).